The primary structure comprises 483 residues: BTB/POZ domain and ankyrin repeat-containing protein NBCL (483 aa).

A BTB domain is found at 25 to 109; sequence SDVTFSVEGR…LYSGQVSIVP (85 aa). Residues 115–129 form a C2HC NPR-type zinc finger; the sequence is RPNCGERACWHTHCT. Residues Cys118, Cys123, His125, and Cys128 each coordinate Zn(2+). ANK repeat units lie at residues 254–283, 284–313, 318–347, and 351–385; these read QKIR…LNLD, EALA…DVNY, SGKT…DPNV, and DGVT…KLRL. Residues 401 to 437 form a disordered region; it reads EGNANANSSNNNNAPCSAATPIYPPMNEDHNSSSSNA. The segment covering 403 to 419 has biased composition (low complexity); sequence NANANSSNNNNAPCSAA.

This sequence belongs to the plant 'ANKYRIN-BTB/POZ' family. 'NOOT-BOP-COCH-like' (NBCL) subfamily. Homodimer. Interacts with APP1 around the plasma membrane and in the nucleus; this interaction disturbs APP1-mediated regulation of the nuclear transcription factor Y subunit (NF-YA1). Mainly expressed in root nodules, to a lesser extent in shoot apical meristems (SAM) and root meristems (RM), and barely in leaves, non-nodulating roots and root apical meristems (RAM).

It localises to the nucleus. It is found in the cytoplasm. The protein resides in the cell membrane. The protein operates within protein modification; protein ubiquitination. In terms of biological role, may act as a substrate-specific adapter of an E3 ubiquitin-protein ligase complex (CUL3-RBX1-BTB) which mediates the ubiquitination and subsequent proteasomal degradation of target proteins. Transcriptional co-regulator involved in the promotion of leaf and floral meristem fate and determinacy. Required for the abscission of senescent organs, probably by regulating the cell wall disorganization in abscission zones (AZs, e.g. pulvini at the base of leaves). Involved in the coordination of the symbiotic nodule developmental program; promotes the formation of root nodules by interacting directly with APP1 to modulate the expression of the nuclear transcription factor Y subunit (NF-YA1), a key nodulin. Necessary for the robust maintenance of nodule identity throughout the nodule developmental program. In Lotus japonicus (Lotus corniculatus var. japonicus), this protein is BTB/POZ domain and ankyrin repeat-containing protein NBCL.